The chain runs to 177 residues: ATP synthase subunit delta 1 (177 aa).

It belongs to the ATPase delta chain family. In terms of assembly, F-type ATPases have 2 components, F(1) - the catalytic core - and F(0) - the membrane proton channel. F(1) has five subunits: alpha(3), beta(3), gamma(1), delta(1), epsilon(1). F(0) has three main subunits: a(1), b(2) and c(10-14). The alpha and beta chains form an alternating ring which encloses part of the gamma chain. F(1) is attached to F(0) by a central stalk formed by the gamma and epsilon chains, while a peripheral stalk is formed by the delta and b chains.

The protein localises to the cell inner membrane. Its function is as follows. F(1)F(0) ATP synthase produces ATP from ADP in the presence of a proton or sodium gradient. F-type ATPases consist of two structural domains, F(1) containing the extramembraneous catalytic core and F(0) containing the membrane proton channel, linked together by a central stalk and a peripheral stalk. During catalysis, ATP synthesis in the catalytic domain of F(1) is coupled via a rotary mechanism of the central stalk subunits to proton translocation. Functionally, this protein is part of the stalk that links CF(0) to CF(1). It either transmits conformational changes from CF(0) to CF(1) or is implicated in proton conduction. The protein is ATP synthase subunit delta 1 of Photobacterium profundum (strain SS9).